A 218-amino-acid polypeptide reads, in one-letter code: Telomere repeats-binding bouquet formation protein 2 (218 aa).

Residues H117–E143 are disordered.

It belongs to the TERB2 family. In terms of assembly, component of the MAJIN-TERB1-TERB2 complex, composed of MAJIN, TERB1 and TERB2. Specifically expressed in germline tissues.

It is found in the chromosome. The protein localises to the telomere. The protein resides in the nucleus inner membrane. Functionally, meiosis-specific telomere-associated protein involved in meiotic telomere attachment to the nucleus inner membrane, a crucial step for homologous pairing and synapsis. Component of the MAJIN-TERB1-TERB2 complex, which promotes telomere cap exchange by mediating attachment of telomeric DNA to the inner nuclear membrane and replacement of the protective cap of telomeric chromosomes: in early meiosis, the MAJIN-TERB1-TERB2 complex associates with telomeric DNA and the shelterin/telosome complex. During prophase, the complex matures and promotes release of the shelterin/telosome complex from telomeric DNA. The protein is Telomere repeats-binding bouquet formation protein 2 of Mus musculus (Mouse).